A 99-amino-acid chain; its full sequence is Aspartyl/glutamyl-tRNA(Asn/Gln) amidotransferase subunit C (99 aa).

Belongs to the GatC family. Heterotrimer of A, B and C subunits.

It carries out the reaction L-glutamyl-tRNA(Gln) + L-glutamine + ATP + H2O = L-glutaminyl-tRNA(Gln) + L-glutamate + ADP + phosphate + H(+). The catalysed reaction is L-aspartyl-tRNA(Asn) + L-glutamine + ATP + H2O = L-asparaginyl-tRNA(Asn) + L-glutamate + ADP + phosphate + 2 H(+). Functionally, allows the formation of correctly charged Asn-tRNA(Asn) or Gln-tRNA(Gln) through the transamidation of misacylated Asp-tRNA(Asn) or Glu-tRNA(Gln) in organisms which lack either or both of asparaginyl-tRNA or glutaminyl-tRNA synthetases. The reaction takes place in the presence of glutamine and ATP through an activated phospho-Asp-tRNA(Asn) or phospho-Glu-tRNA(Gln). In Burkholderia mallei (strain NCTC 10247), this protein is Aspartyl/glutamyl-tRNA(Asn/Gln) amidotransferase subunit C.